Consider the following 369-residue polypeptide: Anhydro-N-acetylmuramic acid kinase (369 aa).

12–19 (GTSMDGVD) lines the ATP pocket.

The protein belongs to the anhydro-N-acetylmuramic acid kinase family.

The enzyme catalyses 1,6-anhydro-N-acetyl-beta-muramate + ATP + H2O = N-acetyl-D-muramate 6-phosphate + ADP + H(+). It functions in the pathway amino-sugar metabolism; 1,6-anhydro-N-acetylmuramate degradation. The protein operates within cell wall biogenesis; peptidoglycan recycling. Functionally, catalyzes the specific phosphorylation of 1,6-anhydro-N-acetylmuramic acid (anhMurNAc) with the simultaneous cleavage of the 1,6-anhydro ring, generating MurNAc-6-P. Is required for the utilization of anhMurNAc either imported from the medium or derived from its own cell wall murein, and thus plays a role in cell wall recycling. In Shewanella loihica (strain ATCC BAA-1088 / PV-4), this protein is Anhydro-N-acetylmuramic acid kinase.